Reading from the N-terminus, the 72-residue chain is uncharacterized protein (72 aa).

Residues 23 to 45 form a helical membrane-spanning segment; the sequence is ITNLLITTILLCFFNATTYWKLF.

The protein resides in the membrane. This is an uncharacterized protein from Schizosaccharomyces pombe (strain 972 / ATCC 24843) (Fission yeast).